A 284-amino-acid chain; its full sequence is Bifunctional protein FolD (284 aa).

An NADP(+)-binding site is contributed by 166-168 (GAS).

The protein belongs to the tetrahydrofolate dehydrogenase/cyclohydrolase family. As to quaternary structure, homodimer.

The catalysed reaction is (6R)-5,10-methylene-5,6,7,8-tetrahydrofolate + NADP(+) = (6R)-5,10-methenyltetrahydrofolate + NADPH. It carries out the reaction (6R)-5,10-methenyltetrahydrofolate + H2O = (6R)-10-formyltetrahydrofolate + H(+). Its pathway is one-carbon metabolism; tetrahydrofolate interconversion. Catalyzes the oxidation of 5,10-methylenetetrahydrofolate to 5,10-methenyltetrahydrofolate and then the hydrolysis of 5,10-methenyltetrahydrofolate to 10-formyltetrahydrofolate. In Legionella pneumophila (strain Corby), this protein is Bifunctional protein FolD.